Here is a 580-residue protein sequence, read N- to C-terminus: Lysine--tRNA ligase (580 aa).

Positions 43 to 51 (PSGPIHLGN) match the 'HIGH' region motif. Residues 178–209 (KAPAKKSQKPLDEAELEAAEGSGAAAEDDGSS) form a disordered region. Positions 196 to 209 (AEGSGAAAEDDGSS) are enriched in low complexity. The short motif at 325-329 (KMSSS) is the 'KMSKS' region element.

The protein belongs to the class-I aminoacyl-tRNA synthetase family.

It is found in the cytoplasm. It catalyses the reaction tRNA(Lys) + L-lysine + ATP = L-lysyl-tRNA(Lys) + AMP + diphosphate. The protein is Lysine--tRNA ligase (lysS) of Streptomyces coelicolor (strain ATCC BAA-471 / A3(2) / M145).